Consider the following 378-residue polypeptide: Lipid-A-disaccharide synthase (378 aa).

It belongs to the LpxB family.

It catalyses the reaction a lipid X + a UDP-2-N,3-O-bis[(3R)-3-hydroxyacyl]-alpha-D-glucosamine = a lipid A disaccharide + UDP + H(+). It functions in the pathway bacterial outer membrane biogenesis; LPS lipid A biosynthesis. Functionally, condensation of UDP-2,3-diacylglucosamine and 2,3-diacylglucosamine-1-phosphate to form lipid A disaccharide, a precursor of lipid A, a phosphorylated glycolipid that anchors the lipopolysaccharide to the outer membrane of the cell. This Pseudomonas paraeruginosa (strain DSM 24068 / PA7) (Pseudomonas aeruginosa (strain PA7)) protein is Lipid-A-disaccharide synthase.